The following is a 315-amino-acid chain: Mitochondrial glycine transporter (315 aa).

Solcar repeat units lie at residues 19 to 102 (SKTT…LRTG), 125 to 206 (TANL…LKRR), and 221 to 305 (KSSS…LILR). 6 helical membrane passes run 25 to 50 (FTAG…TRVQ), 77 to 103 (GTLP…RTGL), 128 to 153 (LATG…VRYE), 181 to 204 (GFGA…EQLK), 225 to 251 (INFV…KTRL), and 280 to 298 (GLGL…AWTV).

It belongs to the mitochondrial carrier (TC 2.A.29) family. SLC25A38 subfamily.

The protein localises to the mitochondrion inner membrane. It catalyses the reaction glycine(in) = glycine(out). Its function is as follows. Mitochondrial glycine transporter that imports glycine into the mitochondrial matrix. Plays an important role in providing glycine for the first enzymatic step in heme biosynthesis, the condensation of glycine with succinyl-CoA to produce 5-aminolevulinate (ALA) in the mitochondrial matrix. The chain is Mitochondrial glycine transporter from Aspergillus niger (strain ATCC MYA-4892 / CBS 513.88 / FGSC A1513).